The following is a 434-amino-acid chain: MGNIVAIVGRPNVGKSTFFNRLIQRREAIIDSVSGVTRDRHYGKSDWNGKKFSLIDTGGYVKGSDDIFEAEIDKQVELAIDEADAIIFIVDVESGVTSMDEEVANLLRRVNKPVLLAVNKVDNNKRLANAVEFYSLGLGEYFPIASTNGSGTGDLLDALIEALPEIEEEDESELPRFAVVGRPNAGKSSFINALIGEDRYIVTDIAGTTRDSIDTRYNRFGFEFNLVDTAGIRRKSKVKENLEFYSVMRSVRAIENCDVCLVVLDATRGFDGQVQNIFWLAQRNHKGIVILVNKWDLVDKETNTMKEYEAMIRREIEPFTDVPIVFISVLTKQRVFKAIETAVKVFESRSKKIKTRQFNDVMLPIIERNPPPAYKGKYVKIKFCMQLPTPHPQFAFFCNLPQYVRDPYKRFLENKLRQEFDFQGVPISIFFRKK.

EngA-type G domains are found at residues 3–167 (NIVA…PEIE) and 175–350 (PRFA…ESRS). GTP is bound by residues 9-16 (GRPNVGKS), 56-60 (DTGGY), 119-122 (NKVD), 181-188 (GRPNAGKS), 228-232 (DTAGI), and 293-296 (NKWD). Positions 351–434 (KKIKTRQFND…VPISIFFRKK (84 aa)) constitute a KH-like domain.

It belongs to the TRAFAC class TrmE-Era-EngA-EngB-Septin-like GTPase superfamily. EngA (Der) GTPase family. In terms of assembly, associates with the 50S ribosomal subunit.

GTPase that plays an essential role in the late steps of ribosome biogenesis. The polypeptide is GTPase Der (Christiangramia forsetii (strain DSM 17595 / CGMCC 1.15422 / KT0803) (Gramella forsetii)).